A 692-amino-acid chain; its full sequence is Elongation factor G (692 aa).

The tr-type G domain occupies 8-282 (EKTRNIGIMA…AVLDYLPAPT (275 aa)). Residues 17–24 (AHIDAGKT), 81–85 (DTPGH), and 135–138 (NKMD) each bind GTP.

This sequence belongs to the TRAFAC class translation factor GTPase superfamily. Classic translation factor GTPase family. EF-G/EF-2 subfamily.

Its subcellular location is the cytoplasm. Catalyzes the GTP-dependent ribosomal translocation step during translation elongation. During this step, the ribosome changes from the pre-translocational (PRE) to the post-translocational (POST) state as the newly formed A-site-bound peptidyl-tRNA and P-site-bound deacylated tRNA move to the P and E sites, respectively. Catalyzes the coordinated movement of the two tRNA molecules, the mRNA and conformational changes in the ribosome. The protein is Elongation factor G of Bacillus velezensis (strain DSM 23117 / BGSC 10A6 / LMG 26770 / FZB42) (Bacillus amyloliquefaciens subsp. plantarum).